Consider the following 48-residue polypeptide: Delta-actitoxin-Bcg1b (48 aa).

Intrachain disulfides connect Cys-4-Cys-45, Cys-6-Cys-35, and Cys-28-Cys-46.

Belongs to the sea anemone sodium channel inhibitory toxin family. Type I subfamily.

Its subcellular location is the secreted. It localises to the nematocyst. In terms of biological role, binds to the sodium channels Nav1.1/SCN1A (EC(50)=165 nM), Nav1.5/SCN5A (EC(50)=103 nM) and Nav1.6/SCN8A (EC(50)=133 nM), thereby delaying their inactivation. Also inhibits Nav1.2/SCN2A, Nav1.3/SCN3A, and Nav1.4/SCN4A, but to a lesser extent. Inhibits Nav1.5 differently from isoforms Nav1.1 and Nav1.6. In Nav1.5 the effect consists in a right-shift of inactivation; whereas in both Nav1.1 and Nav1.6 the effect consists in an incomplete inactivation. This is Delta-actitoxin-Bcg1b from Bunodosoma cangicum (Sea anemone).